We begin with the raw amino-acid sequence, 467 residues long: Dimethylamine methyltransferase MtbB1 (467 aa).

A non-standard amino acid (pyrrolysine) is located at residue pyrrolysine 356.

It belongs to the dimethylamine methyltransferase family. May form homotetramers or homopentamers.

The catalysed reaction is Co(I)-[dimethylamine-specific corrinoid protein] + dimethylamine + H(+) = methyl-Co(III)-[dimethylamine-specific corrinoid protein] + methylamine. It functions in the pathway one-carbon metabolism; methanogenesis from dimethylamine. Catalyzes the transfer of a methyl group from dimethylamine to the corrinoid cofactor of MtbC. The major or perhaps only DMA methyltransferase expressed under inducing conditions. This chain is Dimethylamine methyltransferase MtbB1, found in Methanosarcina barkeri.